Reading from the N-terminus, the 1076-residue chain is ESX secretion system protein YueB (1076 aa).

The chain crosses the membrane as a helical span at residues 9 to 29 (IKLISAVIIILLLPVLFFRFI). Disordered stretches follow at residues 372-404 (RLSLLKPKESDEKEDGEDTSDNKDDTDKEDIED) and 423-552 (IKDI…ETDI). Positions 423 to 439 (IKDISEGLKEPEQEKPT) are enriched in basic and acidic residues. Composition is skewed to polar residues over residues 449-495 (DDSP…NIET) and 503-522 (SKNVPEQDTNTENTGTSKTD). Residues 552-622 (ISGAKKRLNE…TKKLVDFDNN (71 aa)) adopt a coiled-coil conformation. 5 consecutive transmembrane segments (helical) span residues 904-924 (TVPPVVILVIVLISSLLIGYF), 938-958 (ALFGILNILVGLMISLFGLNI), 964-984 (DQTIKWSVFTILLLVASSAFI), 995-1015 (GWVASAAMILFYVAPLIDLIM), and 1040-1060 (TMGITVLLIITVIAVALPLII).

It belongs to the EsaA family.

It localises to the cell membrane. Functionally, required for YukE secretion. Probable component or regulator of the ESX/ESAT-6-like secretion system (BsEss). Bacteriophage SPP1 receptor. Essential for the irreversible adsorption of the bacteriophage. The chain is ESX secretion system protein YueB (yueB) from Bacillus subtilis (strain 168).